The following is a 247-amino-acid chain: CDP-diacylglycerol pyrophosphatase (247 aa).

The helical transmembrane segment at 5 to 22 (IVLALVVSVAVAGGWLWM) threads the bilayer.

It belongs to the Cdh family.

The protein resides in the cell inner membrane. The enzyme catalyses a CDP-1,2-diacyl-sn-glycerol + H2O = a 1,2-diacyl-sn-glycero-3-phosphate + CMP + 2 H(+). The protein operates within phospholipid metabolism; CDP-diacylglycerol degradation; phosphatidate from CDP-diacylglycerol: step 1/1. In Enterobacter sp. (strain 638), this protein is CDP-diacylglycerol pyrophosphatase.